Reading from the N-terminus, the 367-residue chain is Large ribosomal subunit protein mL38 (367 aa).

The N-terminal 29 residues, Met-1–Pro-29, are a transit peptide targeting the mitochondrion.

This sequence belongs to the phosphatidylethanolamine-binding protein family. Mitochondrion-specific ribosomal protein mL38 subfamily. Component of the mitochondrial large ribosomal subunit (mt-LSU). Mature yeast 74S mitochondrial ribosomes consist of a small (37S) and a large (54S) subunit. The 37S small subunit contains a 15S ribosomal RNA (15S mt-rRNA) and 34 different proteins. The 54S large subunit contains a 21S rRNA (21S mt-rRNA) and 46 different proteins.

It localises to the mitochondrion. Its function is as follows. Component of the mitochondrial ribosome (mitoribosome), a dedicated translation machinery responsible for the synthesis of mitochondrial genome-encoded proteins, including at least some of the essential transmembrane subunits of the mitochondrial respiratory chain. The mitoribosomes are attached to the mitochondrial inner membrane and translation products are cotranslationally integrated into the membrane. The polypeptide is Large ribosomal subunit protein mL38 (MRPL35) (Saccharomyces cerevisiae (strain ATCC 204508 / S288c) (Baker's yeast)).